The primary structure comprises 93 residues: Toxin RelE1 (93 aa).

This sequence belongs to the RelE toxin family.

Toxic component of a type II toxin-antitoxin (TA) system. Its toxic effect is neutralized by coexpression with cognate antitoxin RelB1 but no other ParD or RelB antitoxin. The chain is Toxin RelE1 (relE1) from Caulobacter vibrioides (strain ATCC 19089 / CIP 103742 / CB 15) (Caulobacter crescentus).